A 204-amino-acid chain; its full sequence is Holliday junction branch migration complex subunit RuvA (204 aa).

The interval 1–64 is domain I; sequence MIGRLRGILL…EDAQLLYGFN (64 aa). The segment at 65 to 143 is domain II; it reads TVKERALFRE…GWSAGDLFTP (79 aa). Residues 144–155 are flexible linker; that stretch reads FTDAAPVDSGST. Residues 156–204 form a domain III region; that stretch reads SSNSAEEEAVSALLALGYKPVQASKVVSQIAKPDMTSEQLIREALKSMV.

Belongs to the RuvA family. In terms of assembly, homotetramer. Forms an RuvA(8)-RuvB(12)-Holliday junction (HJ) complex. HJ DNA is sandwiched between 2 RuvA tetramers; dsDNA enters through RuvA and exits via RuvB. An RuvB hexamer assembles on each DNA strand where it exits the tetramer. Each RuvB hexamer is contacted by two RuvA subunits (via domain III) on 2 adjacent RuvB subunits; this complex drives branch migration. In the full resolvosome a probable DNA-RuvA(4)-RuvB(12)-RuvC(2) complex forms which resolves the HJ.

It is found in the cytoplasm. In terms of biological role, the RuvA-RuvB-RuvC complex processes Holliday junction (HJ) DNA during genetic recombination and DNA repair, while the RuvA-RuvB complex plays an important role in the rescue of blocked DNA replication forks via replication fork reversal (RFR). RuvA specifically binds to HJ cruciform DNA, conferring on it an open structure. The RuvB hexamer acts as an ATP-dependent pump, pulling dsDNA into and through the RuvAB complex. HJ branch migration allows RuvC to scan DNA until it finds its consensus sequence, where it cleaves and resolves the cruciform DNA. The polypeptide is Holliday junction branch migration complex subunit RuvA (Vibrio vulnificus (strain CMCP6)).